The sequence spans 424 residues: Virion nicking-joining enzyme (424 aa).

Belongs to the orthopoxvirus OPG042 family.

It is found in the virion. Functionally, DNA nicking enzyme that cleaves extruded cruciform DNA at its tip. Probably nicks viral hairpins. This chain is Virion nicking-joining enzyme (OPG042), found in Cynomys gunnisoni (Gunnison's prairie dog).